The primary structure comprises 420 residues: uncharacterized protein (420 aa).

Positions 43 to 215 constitute a VWFA domain; the sequence is NLCLVLDHSG…HTFRQLFQRM (173 aa). A disordered region spans residues 389 to 420; it reads LQSGEDLSEGDRKKTRMVSKTTLQPPSAPSEH.

This is an uncharacterized protein from Synechocystis sp. (strain ATCC 27184 / PCC 6803 / Kazusa).